Here is a 256-residue protein sequence, read N- to C-terminus: Transmembrane protein 74B (256 aa).

The interval 1-111 (MPPAQGYEFA…LSLHSEEGPA (111 aa)) is disordered. A compositionally biased stretch (low complexity) spans 80-96 (RLGSSPSPPGGVSSLPR). The segment covering 97–108 (SQRDDLSLHSEE) has biased composition (basic and acidic residues). Transmembrane regions (helical) follow at residues 123–143 (FVSA…AYAI) and 177–197 (IIAG…LLMV).

Belongs to the TMEM74 family.

Its subcellular location is the membrane. The chain is Transmembrane protein 74B (TMEM74B) from Homo sapiens (Human).